The primary structure comprises 955 residues: MGIKQHNGNTKADRLAELKIRSPSIQLIKFGAIGLNAIIFSPLLIAADTGSQYGTNITINDGDRITGDTADPSGNLYGVMTPAGNTPGNINLGNDVTVNVNDASGYAKGIIIQGKNSSLTANRLTVDVVGQTSAIGINLIGDYTHADLGTGSTIKSNDDGIIIGHSSTLTATQFTIENSNGIGLTINDYGTSVDLGSGSKITTDGSTGVYIGGLNGNNANGAARFTATDLTIDVQGYSAMGINVQKNSVVDLGTNSTIKTNGDNAHGLWSFGQVSANALTVDVTGAAANGVEVRGGTTTIGADSHISSAQGGGLVTSGSDAIINFTGTAAQRNSIFSGGSYGASAQTATAVVNMQNTDITVDRNGSLALGLWALSGGRITGDSLAITGAAGARGIYAMTNSQIDLTSDLVIDMSTPDQMAIATQHDDGYAASRINASGRMLINGSVLSKGGLINLDMHPGSVWTGSSLSDNVNGGKLDVAMNNSVWNVTSNSNLDTLALSHSTVDFASHGSTAGTFATLNVENLSGNSTFIMRADVVGEGNGVNNKGDLLNISGSSAGNHVLAIRNQGSEATTGNEVLTVVKTTDGAASFSASSQVELGGYLYDVRKNGTNWELYASGTVPEPTPNPEPTPAPAQPPIVNPDPTPEPAPTPKPTTTADAGGNYLNVGYLLNYVENRTLMQRMGDLRNQSKDGNIWLRSYGGSLDSFASGKLSGFDMGYSGIQFGGDKRLSDVMPLYVGLYIGSTHASPDYSGGDGTARSDYMGMYASYMAQNGFYSDLVIKASRQKNSFHVLDSQNNGVNANGTANGMSISLEAGQRFNLSPTGYGFYIEPQTQLTYSHQNEMTMKASNGLNIHLNHYESLLGRASMILGYDITAGNSQLNVYVKTGAIREFSGDTEYLLNNSREKYSFKGNGWNNGVGVSAQYNKQHTFYLEADYTQGNLFDQKQVNGGYRFSF.

Residues Ala616 to Ala659 are disordered. The span at Glu622–Lys652 shows a compositional bias: pro residues. Positions Asn687 to Phe955 constitute an Autotransporter domain.

Upon overexpression shows increased adherence to polyvinyl chloride (PVC) plates, increased mature biofilm formation. The protein is Probable autotransporter YcgV (ycgV) of Escherichia coli (strain K12).